The chain runs to 265 residues: UPF0294 protein KPK_4510 (265 aa).

This sequence belongs to the UPF0294 family.

The protein resides in the cytoplasm. This chain is UPF0294 protein KPK_4510, found in Klebsiella pneumoniae (strain 342).